The sequence spans 437 residues: GTPase Obg (437 aa).

The Obg domain maps to 2–160; sequence SMFLDTAKIS…RQLELELKIL (159 aa). An OBG-type G domain is found at 161–338; that stretch reads ADVGLVGFPS…LLEATAELLA (178 aa). Residues 167–174, 192–196, 214–217, 284–287, and 319–321 each bind GTP; these read GFPSVGKS, FTTIV, DLPG, NKMD, and SSL. Positions 174 and 194 each coordinate Mg(2+). Residues 359 to 437 form the OCT domain; the sequence is GFAEAEKDFE…IGKFEFEFVD (79 aa).

Belongs to the TRAFAC class OBG-HflX-like GTPase superfamily. OBG GTPase family. In terms of assembly, monomer. It depends on Mg(2+) as a cofactor.

The protein localises to the cytoplasm. Functionally, an essential GTPase which binds GTP, GDP and possibly (p)ppGpp with moderate affinity, with high nucleotide exchange rates and a fairly low GTP hydrolysis rate. Plays a role in control of the cell cycle, stress response, ribosome biogenesis and in those bacteria that undergo differentiation, in morphogenesis control. The sequence is that of GTPase Obg from Streptococcus pyogenes serotype M18 (strain MGAS8232).